The sequence spans 207 residues: Large ribosomal subunit protein uL4 (207 aa).

Residues 57–78 (VAGGGKKPWRQKGTGRARHGSI) form a disordered region. The span at 63-77 (KPWRQKGTGRARHGS) shows a compositional bias: basic residues.

This sequence belongs to the universal ribosomal protein uL4 family. Part of the 50S ribosomal subunit.

Functionally, one of the primary rRNA binding proteins, this protein initially binds near the 5'-end of the 23S rRNA. It is important during the early stages of 50S assembly. It makes multiple contacts with different domains of the 23S rRNA in the assembled 50S subunit and ribosome. Forms part of the polypeptide exit tunnel. The chain is Large ribosomal subunit protein uL4 from Onion yellows phytoplasma (strain OY-M).